Consider the following 624-residue polypeptide: UvrABC system protein C (624 aa).

One can recognise a GIY-YIG domain in the interval 27-105; that stretch reads LSPGVYRMLS…IKSLGPRYNI (79 aa). Residues 215–250 enclose the UVR domain; the sequence is RRVQHDLTARMESAAEAMEYEAAAVFRDRIRALTRI.

Belongs to the UvrC family. As to quaternary structure, interacts with UvrB in an incision complex.

Its subcellular location is the cytoplasm. In terms of biological role, the UvrABC repair system catalyzes the recognition and processing of DNA lesions. UvrC both incises the 5' and 3' sides of the lesion. The N-terminal half is responsible for the 3' incision and the C-terminal half is responsible for the 5' incision. This Paramagnetospirillum magneticum (strain ATCC 700264 / AMB-1) (Magnetospirillum magneticum) protein is UvrABC system protein C.